The sequence spans 505 residues: MSEQNAQGADEVVDLNNEMKARREKLAALREQGIPFPNDFRRDRTSDQLHAEFDAKEAEELEALNIEVSVAGRMMTRRIMGKASFVTLQDVGGRIQLYVARDDLPEGVYNEQFKKWDLGDILGAKGKLFKTKTGELSIHCTELRLLTKALRPLPDKFHGLQDQEARYRQRYLDLISNDESRNTFKTRSKILAGIRQFMVARGFMEVETPMMQVIPGGASARPFITHHNALDLDMYLRIAPELYLKRLVVGGFERVFEINRNFRNEGISVRHNPEFTMMELYMAYADYKDLIELTESLFRTLAQDVLGTTQVPYGDEVFDFGKPFEKLTMREAIKKYRPETDMADLDNFDSAKAIAESIGIHVEKSWGLGRIVTEIFDEVAEAHLIQPTFITEYPAEVSPLARRNDVNPEITDRFEFFIGGREIGNGFSELNDAEDQAQRFLDQVNAKAAGDDEAMFYDEDYVTALEHGLPPTAGLGIGIDRMVMLFTNSHTIRDVILFPAMRPVK.

Residues Glu-415 and Glu-422 each coordinate Mg(2+).

Belongs to the class-II aminoacyl-tRNA synthetase family. In terms of assembly, homodimer. Requires Mg(2+) as cofactor.

It is found in the cytoplasm. The catalysed reaction is tRNA(Lys) + L-lysine + ATP = L-lysyl-tRNA(Lys) + AMP + diphosphate. The chain is Lysine--tRNA ligase (lysS) from Salmonella typhimurium (strain LT2 / SGSC1412 / ATCC 700720).